The following is a 629-amino-acid chain: Replication protein A 70 kDa DNA-binding subunit D (629 aa).

The disordered stretch occupies residues 112 to 135 (LDSKSGEEEAREPKKQKLEHSPVS). Basic and acidic residues predominate over residues 115–131 (KSGEEEAREPKKQKLEH). A DNA-binding region (OB) is located at residues 194-280 (WTIKVRVTNK…QNDYEMTLNE (87 aa)). Residues 492–512 (CKTCNKKVTEALDSGYWCEGC) form a C4-type zinc finger.

Belongs to the replication factor A protein 1 family. Heterotrimer of RPA1, RPA2 and RPA3 (canonical replication protein A complex).

It localises to the nucleus. In terms of biological role, component of the replication protein A complex (RPA) required for DNA recombination, repair and replication. The activity of RPA is mediated by single-stranded DNA binding and protein interactions. Probably involved in repair of double-strand DNA breaks (DSBs) induced by genotoxic stresses. This is Replication protein A 70 kDa DNA-binding subunit D (RPA1D) from Arabidopsis thaliana (Mouse-ear cress).